The chain runs to 65 residues: Large ribosomal subunit protein bL35 (65 aa).

The protein belongs to the bacterial ribosomal protein bL35 family.

In Oleidesulfovibrio alaskensis (strain ATCC BAA-1058 / DSM 17464 / G20) (Desulfovibrio alaskensis), this protein is Large ribosomal subunit protein bL35.